A 234-amino-acid polypeptide reads, in one-letter code: Eukaryotic translation initiation factor 3 subunit K (234 aa).

Positions 46–219 (SDIEANLALL…EAKPATTTES (174 aa)) constitute a PCI domain.

Belongs to the eIF-3 subunit K family. Component of the eukaryotic translation initiation factor 3 (eIF-3) complex.

It localises to the cytoplasm. Component of the eukaryotic translation initiation factor 3 (eIF-3) complex, which is involved in protein synthesis of a specialized repertoire of mRNAs and, together with other initiation factors, stimulates binding of mRNA and methionyl-tRNAi to the 40S ribosome. The eIF-3 complex specifically targets and initiates translation of a subset of mRNAs involved in cell proliferation. The sequence is that of Eukaryotic translation initiation factor 3 subunit K from Yarrowia lipolytica (strain CLIB 122 / E 150) (Yeast).